The following is a 496-amino-acid chain: Amidophosphoribosyltransferase (496 aa).

Residues 1–21 (MNQSHSFPTDDPLDGDTLHEE) constitute a propeptide that is removed on maturation. Residue Cys22 is the Nucleophile of the active site. The Glutamine amidotransferase type-2 domain maps to 22 to 241 (CGVFGILGHP…NGEVIICEIQ (220 aa)).

This sequence in the C-terminal section; belongs to the purine/pyrimidine phosphoribosyltransferase family.

It carries out the reaction 5-phospho-beta-D-ribosylamine + L-glutamate + diphosphate = 5-phospho-alpha-D-ribose 1-diphosphate + L-glutamine + H2O. The protein operates within purine metabolism; IMP biosynthesis via de novo pathway; N(1)-(5-phospho-D-ribosyl)glycinamide from 5-phospho-alpha-D-ribose 1-diphosphate: step 1/2. Its function is as follows. Catalyzes the formation of phosphoribosylamine from phosphoribosylpyrophosphate (PRPP) and glutamine. The chain is Amidophosphoribosyltransferase from Rhizobium etli (strain ATCC 51251 / DSM 11541 / JCM 21823 / NBRC 15573 / CFN 42).